The chain runs to 165 residues: Probable DNA polymerase III subunit chi (165 aa).

This sequence belongs to the DNA polymerase III chi/HolC chain family. DNA polymerase III contains a core (composed of alpha, epsilon and theta chains) that associates with a tau subunit. This core dimerizes to form the POLIII' complex. PolIII' associates with the gamma complex (composed of gamma, delta, delta', psi and chi chains) and with the beta chain to form the complete DNA polymerase III complex. Interacts directly with the psi subunit (holD). The only subunit of the DNA polymerase III holoenzyme known to interact with single-stranded DNA binding protein (SSB).

It catalyses the reaction DNA(n) + a 2'-deoxyribonucleoside 5'-triphosphate = DNA(n+1) + diphosphate. Functionally, part of the beta sliding clamp loading complex, which hydrolyzes ATP to load the beta clamp onto primed DNA to form the DNA replication pre-initiation complex. DNA polymerase III is a complex, multichain enzyme responsible for most of the replicative synthesis in bacteria. This DNA polymerase also exhibits 3' to 5' exonuclease activity. This is Probable DNA polymerase III subunit chi from Rickettsia prowazekii (strain Madrid E).